An 85-amino-acid polypeptide reads, in one-letter code: Large ribosomal subunit protein bL27 (85 aa).

The disordered stretch occupies residues 1 to 21 (MAHKKGGGSTKNGRDSNPKYL).

It belongs to the bacterial ribosomal protein bL27 family.

The sequence is that of Large ribosomal subunit protein bL27 from Chlorobium chlorochromatii (strain CaD3).